The primary structure comprises 469 residues: Programmed cell death protein 4 (469 aa).

At Met-1 the chain carries N-acetylmethionine. Disordered stretches follow at residues 1–38 (MDVE…EIKN) and 58–128 (KAKR…GTPG). Ser-25 carries the post-translational modification Phosphoserine. The short motif at 58 to 64 (KAKRRLR) is the Nuclear localization signal element. Ser-67 carries the phosphoserine; by PKB and RPS6KB1 modification. Residues Ser-68, Ser-71, Ser-76, and Ser-78 each carry the phosphoserine modification. The Phosphodegron motif lies at 70-76 (DSGRGDS). Low complexity predominate over residues 74 to 83 (GDSVSDNGSD). Positions 84-93 (TLRSGVTVPT) are enriched in polar residues. Phosphoserine is present on Ser-94. The segment covering 114–125 (KKGGAGGKGVWG) has biased composition (gly residues). At Tyr-152 the chain carries Phosphotyrosine. The MI 1 domain occupies 163 to 284 (AFEKTLTPII…CNTYIDSYKG (122 aa)). Phosphoserine occurs at positions 313 and 317. The 124-residue stretch at 326–449 (HLVKEIDMLL…SKQLRDLCPS (124 aa)) folds into the MI 2 domain. A Nuclear localization signal motif is present at residues 448 to 454 (PSRGRKR). Position 457 is a phosphoserine; by PKB (Ser-457).

Belongs to the PDCD4 family. Interacts (via MI domains) with EIF4A2. Interacts (via MI domains) with EIF4A1 (via N-terminal domain). Heterotrimer with EIF4A1; one molecule of PDCD4 binds two molecules of EIF4A1. Interacts with EIF4G1. May form a complex with EIF4A1 and EIF4G1. The interaction between PDCD4 and EIF4A1 interferes with the interaction between EIF4A1 and EIF4G. When phosphorylated, interacts with BTRC and FBXW11. Post-translationally, polyubiquitinated, leading to its proteasomal degradation. Rapidly degraded in response to mitogens. Phosphorylation of the phosphodegron promotes interaction with BTRC and proteasomal degradation. Phosphorylated at Ser-67 by RPS6KB1 in response to mitogens; phosphorylation promotes proteasomal degradation of PDCD4.

Its subcellular location is the nucleus. The protein localises to the cytoplasm. Its function is as follows. Inhibits translation initiation and cap-dependent translation. May excert its function by hindering the interaction between EIF4A1 and EIF4G. Inhibits the helicase activity of EIF4A. Modulates the activation of JUN kinase. Down-regulates the expression of MAP4K1, thus inhibiting events important in driving invasion, namely, MAPK85 activation and consequent JUN-dependent transcription. May play a role in apoptosis. Tumor suppressor. Inhibits tumor promoter-induced neoplastic transformation. Binds RNA. The chain is Programmed cell death protein 4 (PDCD4) from Pongo abelii (Sumatran orangutan).